Consider the following 1194-residue polypeptide: Protein argonaute 3 (1194 aa).

Residues 1 to 98 (MDRGGYRGGR…GRGGGGDRGR (98 aa)) are compositionally biased toward basic and acidic residues. Disordered regions lie at residues 1–277 (MDRG…VSQS) and 299–341 (TVLP…DKGG). The segment covering 142-158 (PPSSSQAQVSQGVAPGD) has biased composition (low complexity). Residues 167 to 180 (VGRDGVGDVGRDGV) are compositionally biased toward basic and acidic residues. The span at 181-214 (GDVGQGGVGDVGQVGVGDVGQGGVGDVGQGGVGD) shows a compositional bias: gly residues. Residues 215–228 (VGRDGVGDVGRDGV) are compositionally biased toward basic and acidic residues. Residues 229 to 238 (GDVGRGGVGD) are compositionally biased toward gly residues. 2 stretches are compositionally biased toward low complexity: residues 256–277 (QLQQ…VSQS) and 299–316 (TVLP…HTAS). Residues 317 to 326 (GSQVMTPKPS) show a composition bias toward polar residues. Basic and acidic residues predominate over residues 327–341 (SSDKKEPVKRPDKGG). The region spanning 540-656 (SVIEYLKLYF…VPMEFCNLVE (117 aa)) is the PAZ domain. The 305-residue stretch at 841-1145 (LVLCAMTGKH…AASRGRVYYE (305 aa)) folds into the Piwi domain.

Belongs to the argonaute family. Ago subfamily.

Its function is as follows. Involved in RNA-mediated post-transcriptional gene silencing (PTGS). Main component of the RNA-induced silencing complex (RISC) that binds to a short guide RNA such as a microRNA (miRNA) or small interfering RNA (siRNA). RISC uses the mature miRNA or siRNA as a guide for slicer-directed cleavage of homologous mRNAs to repress gene expression. This is Protein argonaute 3 (AGO3) from Arabidopsis thaliana (Mouse-ear cress).